The chain runs to 97 residues: UPF0729 protein GD16342 (97 aa).

The segment at 64-97 (KPEKASVGPAEESQNPPLNAIAAETEVDESKKEI) is disordered. A Phosphoserine modification is found at S69.

This sequence belongs to the UPF0729 family.

The sequence is that of UPF0729 protein GD16342 from Drosophila simulans (Fruit fly).